Reading from the N-terminus, the 294-residue chain is ATP phosphoribosyltransferase (294 aa).

The protein belongs to the ATP phosphoribosyltransferase family. Long subfamily. It depends on Mg(2+) as a cofactor.

The protein resides in the cytoplasm. The enzyme catalyses 1-(5-phospho-beta-D-ribosyl)-ATP + diphosphate = 5-phospho-alpha-D-ribose 1-diphosphate + ATP. It participates in amino-acid biosynthesis; L-histidine biosynthesis; L-histidine from 5-phospho-alpha-D-ribose 1-diphosphate: step 1/9. Its activity is regulated as follows. Feedback inhibited by histidine. Functionally, catalyzes the condensation of ATP and 5-phosphoribose 1-diphosphate to form N'-(5'-phosphoribosyl)-ATP (PR-ATP). Has a crucial role in the pathway because the rate of histidine biosynthesis seems to be controlled primarily by regulation of HisG enzymatic activity. This is ATP phosphoribosyltransferase from Maricaulis maris (strain MCS10) (Caulobacter maris).